A 293-amino-acid polypeptide reads, in one-letter code: Shikimate dehydrogenase (NADP(+)) (293 aa).

Residues 20–22 (SLT) and T72 contribute to the shikimate site. K76 (proton acceptor) is an active-site residue. N97 and D112 together coordinate shikimate. NADP(+)-binding positions include 136-140 (GAGGA) and I230. Residue Y232 participates in shikimate binding. NADP(+) is bound at residue G253.

Belongs to the shikimate dehydrogenase family. As to quaternary structure, homodimer.

The enzyme catalyses shikimate + NADP(+) = 3-dehydroshikimate + NADPH + H(+). It participates in metabolic intermediate biosynthesis; chorismate biosynthesis; chorismate from D-erythrose 4-phosphate and phosphoenolpyruvate: step 4/7. In terms of biological role, involved in the biosynthesis of the chorismate, which leads to the biosynthesis of aromatic amino acids. Catalyzes the reversible NADPH linked reduction of 3-dehydroshikimate (DHSA) to yield shikimate (SA). This chain is Shikimate dehydrogenase (NADP(+)), found in Pseudarthrobacter chlorophenolicus (strain ATCC 700700 / DSM 12829 / CIP 107037 / JCM 12360 / KCTC 9906 / NCIMB 13794 / A6) (Arthrobacter chlorophenolicus).